A 68-amino-acid chain; its full sequence is Alpha-conotoxin PIVA (68 aa).

The N-terminal stretch at 1-16 is a signal peptide; sequence MFTVFLLVVLATTVVS. The propeptide occupies 17-41; the sequence is FTSDRASDDRNTNDKASRLLSHVVR. 3 disulfide bridges follow: C43-C57, C44-C52, and C55-C64. 4-hydroxyproline; partial is present on residues P48 and P54. P61 carries the 4-hydroxyproline modification. Q66 is modified (glutamine amide).

It belongs to the conotoxin A superfamily. In terms of tissue distribution, expressed by the venom duct.

Its subcellular location is the secreted. Its function is as follows. Alpha-conotoxins act on postsynaptic membranes, they bind to the nicotinic acetylcholine receptors (nAChR) and thus inhibit them. This toxin has higher affinity for the adult subtype (alpha-1-beta-1-gamma-delta (CHRNA1-CHRNB1-CHRNG-CHRND) subunits) (IC(50)=2.3 nM) of the receptor than for the fetal subtype (alpha-1-beta-1-epsilon-delta (CHRNA1-CHRNB1-CHRND-CHRNE) subunits) (IC(50)=22 nM). The sequence is that of Alpha-conotoxin PIVA from Conus purpurascens (Purple cone).